The following is a 1463-amino-acid chain: MSDKFQLLLQQIGMPLDARQSGAFSTATIEKVVLHKVSKLWEFTFRFETPLPLMDYQLFKARLATEFEKVGNKIQFSIVSDAEAFEAGLVEAYYPEAFTEDLCQSAGFKALFQPLEVAYRDGVLWIKGPETIDTDHFRKNHLPNLVEQYKRFGFGNLAVDIQVCQEMTQQQAEIFHAQNAEIYQQANEENLAALEQLAQMAPPPEAAQPFVPEYKKNRPAKVNIEKAEITPMIEVDSEENRIVFEGLVFEVEQKTTKTGRVIINFKMTDYTSSFTLQKWAKNEEEAQKFDMVKKGNWLRVRGNVETNNFTRDLTMNVQEVQEVKKEIRKDLMPEGEKRVEFHAHTNMSTMDALPAVEDLVARAAAWGHKAVAITDHGNVQSFPHGYHAARKAGIKPLFGMEANIVEDSVPIAYNEADVVLSDATYVVFDVETTGLSAVNNALIQIAASKMHKGNIIAEFDEFIDPGHPLSQFTTDLTGITDEHVRGSKPLEQVLREFQDFCQDSVMVAHNATFDVGFMNVNYERAGLPIISQPVIDTLEFARNLYPDFKRHGLGPLTKRFGVALEHHHMANYDAEATGRLLFIFLKDALEKHNLTNLNQLNTELIAEDSYKKARVKHATLYVINQVGLKNMFKLVSLSNTKYFEGVPRIPRTVLNAHREGLILGTACQEGEVFDDLLSKGIDEAVKTAAYYDFIEVMPPALYAPMIAKEQFKDMAEIEETIKQLIEVGRRAGLPVLATGNVHYIDPEEEIYREIIVRALGQGAPINWTIGNGENAQPAPLPKAHFRTTSEMLDEFAFLGESLAREIVITNPNAMLDRFEDVQVVKTDLYTPYIEKAEETVAELTYQKAFEIYGNPLPDIIDLRIEKELTSILGNGFAVIYLASQMLVHRSNERGYLVGSRGSVGSSFVATMIGITEVNPMPPHYVCPNCQHSEFITDGSYGSGFDLPDKDCEKCGTKYKKDGQDIPFETFLGFDGDKVPDIDLNFSGDDQPSAHLDVRDIFGEENAFRAGTVGTVAAKTAYGFVRGYERDYGKFYRDVEVERLAAGAAGVKRTTGQHPGGIIVFPDYMDVYDFTPVQYPADDVTASWQTTHFNFHDIDENVLKLDILGHDDPTMVRKLQDLSGIDPQTIPADDKGVMALFSGTEILGVTPEQIGTPTGMLGIPEFGTNFVRGMVEETKPTTFSELLQLSGLSHGTDVWLGNAQDLIKAGIANLSTVIGCRDDIMVYLMHAGLPPKMAFNIMERVRKGLWLKISEEERNGYIQAMKDNKVPDWYIESCGKIKYMFPKAHAAAYVMMALRVAYFKVHHPLYYYCAYFSIRAKAFDLATMSGGLERVKAKMEEIALKKKNNEASNVEQDLYTTLELVNEMLERGFKFGKLDLYKSHATDFLIEEDTLIPPFVAMDGLGENVAKQVVAARAEGEFLSKTELRKRGGLSGTLVEKMDEMGILGKMPEDNQLSLFDDLF.

The 157-residue stretch at 425–581 (YVVFDVETTG…YDAEATGRLL (157 aa)) folds into the Exonuclease domain.

This sequence belongs to the DNA polymerase type-C family. PolC subfamily.

It localises to the cytoplasm. The catalysed reaction is DNA(n) + a 2'-deoxyribonucleoside 5'-triphosphate = DNA(n+1) + diphosphate. Its function is as follows. Required for replicative DNA synthesis. This DNA polymerase also exhibits 3' to 5' exonuclease activity. The sequence is that of DNA polymerase III PolC-type from Streptococcus suis (strain 98HAH33).